Here is a 254-residue protein sequence, read N- to C-terminus: NAD kinase (254 aa).

The Proton acceptor role is filled by aspartate 44. Residues 44–45 (DG), 114–115 (NE), aspartate 144, alanine 152, 155–160 (TAYNYS), and alanine 179 contribute to the NAD(+) site.

The protein belongs to the NAD kinase family. It depends on a divalent metal cation as a cofactor.

It is found in the cytoplasm. It carries out the reaction NAD(+) + ATP = ADP + NADP(+) + H(+). Its function is as follows. Involved in the regulation of the intracellular balance of NAD and NADP, and is a key enzyme in the biosynthesis of NADP. Catalyzes specifically the phosphorylation on 2'-hydroxyl of the adenosine moiety of NAD to yield NADP. The sequence is that of NAD kinase from Cereibacter sphaeroides (strain ATCC 17023 / DSM 158 / JCM 6121 / CCUG 31486 / LMG 2827 / NBRC 12203 / NCIMB 8253 / ATH 2.4.1.) (Rhodobacter sphaeroides).